The following is a 310-amino-acid chain: Fatty acid elongase 1 (310 aa).

The Lumenal portion of the chain corresponds to 1 to 63 (MVSDWKNFCL…VGKQPLSEPR (63 aa)). The chain crosses the membrane as a helical span at residues 64 to 84 (PVLLFIAMYYVVIFGGRSLVK). At 85–100 (SCKPLKLRFISQVHNL) the chain is on the cytoplasmic side. A helical transmembrane segment spans residues 101 to 121 (MLTSVSFLWLILMVEQMLPIV). Over 122-141 (YRHGLYFAVCNVESWTQPME) the chain is Lumenal. A helical membrane pass occupies residues 142–163 (TLYYLNYMTKFVEFADTVLMVL). Residues 164–174 (KHRKLTFLHTY) are Cytoplasmic-facing. The short motif at 172–176 (HTYHH) is the HxxHH motif element. A helical membrane pass occupies residues 175 to 196 (HHGATALLCYNQLVGYTAVTWV). The Lumenal segment spans residues 197–201 (PVTLN). The chain crosses the membrane as a helical span at residues 202-223 (LAVHVLMYWYYFLSASGIRVWW). Residues 224-234 (KAWVTRLQIVQ) lie on the Cytoplasmic side of the membrane. The helical transmembrane segment at 235-255 (FMLDLIVVYYVLYQKIVAAYF) threads the bilayer. The Lumenal segment spans residues 256 to 271 (KNACTPQCEDCLGSMT). A helical transmembrane segment spans residues 272 to 292 (AIAAGAAILTSYLFLFISFYI). Over 293–310 (EVYKRGSASGKKKINKNN) the chain is Cytoplasmic. The short motif at 304–307 (KKIN) is the Di-lysine motif element.

This sequence belongs to the ELO family.

It is found in the endoplasmic reticulum membrane. The catalysed reaction is a very-long-chain acyl-CoA + malonyl-CoA + H(+) = a very-long-chain 3-oxoacyl-CoA + CO2 + CoA. It catalyses the reaction tetradecanoyl-CoA + malonyl-CoA + H(+) = 3-oxohexadecanoyl-CoA + CO2 + CoA. The enzyme catalyses (9Z)-tetradecenoyl-CoA + malonyl-CoA + H(+) = 3-oxo-(11Z)-hexadecenoyl-CoA + CO2 + CoA. In terms of biological role, component of a microsomal membrane bound medium-chain fatty acid elongation system, which extends medium-chain-length fatty acids to long-chain fatty acids. Component of elongase I, which extends 12-16-carbon fatty acyl-CoAs such as lauroyl-CoA to 14-18-carbon fatty acids by incorporation of malonyl-CoA. In Saccharomyces cerevisiae (strain ATCC 204508 / S288c) (Baker's yeast), this protein is Fatty acid elongase 1.